Consider the following 334-residue polypeptide: Coiled-coil domain-containing protein 89 (334 aa).

Residues Glu75–Leu318 are a coiled coil.

The protein belongs to the CCDC89 family. As to quaternary structure, interacts (via C-terminus) with hey1/bc8 (via Orange domain). In terms of tissue distribution, in adults, expressed at varying levels in different organs including the liver and brain, with highest expression in the testis.

It is found in the cytoplasm. Its subcellular location is the nucleus. This is Coiled-coil domain-containing protein 89 from Xenopus laevis (African clawed frog).